The chain runs to 695 residues: NADPH--cytochrome P450 reductase (695 aa).

The Lumenal segment spans residues 1–8 (MAQLDTLD). A helical transmembrane segment spans residues 9–31 (VVVLAVLLAGSIAYFTKGTFWAV). Residues 32–695 (AKDPYASSGP…SGSYQEDVWS (664 aa)) are Cytoplasmic-facing. The Flavodoxin-like domain occupies 66-221 (CVIFYGSQTG…DFLAWKEPMW (156 aa)). FMN contacts are provided by residues 72–77 (SQTGTA), 123–126 (ATYG), 169–178 (LGNNTYEHYN), and Asp204. Positions 277-538 (HNPYIAPIVE…HVRHSNFKLP (262 aa)) constitute an FAD-binding FR-type domain. Residue Arg296 coordinates NADP(+). Residues 451-454 (RYYS), 469-471 (TAV), and 486-489 (GVTT) contribute to the FAD site. Positions 497-516 (QKQNGDPSPDPHGQTYAING) are disordered. Residues Thr552, 614–615 (SR), 620–624 (KVYVQ), and Glu656 contribute to the NADP(+) site. Trp694 is a binding site for FAD.

The protein belongs to the NADPH--cytochrome P450 reductase family. In the N-terminal section; belongs to the flavodoxin family. This sequence in the C-terminal section; belongs to the flavoprotein pyridine nucleotide cytochrome reductase family. FAD is required as a cofactor. The cofactor is FMN.

The protein localises to the endoplasmic reticulum membrane. The protein resides in the mitochondrion outer membrane. It is found in the cell membrane. It catalyses the reaction 2 oxidized [cytochrome P450] + NADPH = 2 reduced [cytochrome P450] + NADP(+) + H(+). Functionally, this enzyme is required for electron transfer from NADP to cytochrome P450 in microsomes. It can also provide electron transfer to heme oxygenase and cytochrome B5. Involved in ergosterol biosynthesis. In Emericella nidulans (strain FGSC A4 / ATCC 38163 / CBS 112.46 / NRRL 194 / M139) (Aspergillus nidulans), this protein is NADPH--cytochrome P450 reductase.